Consider the following 388-residue polypeptide: Valine--pyruvate aminotransferase (388 aa).

Lys234 carries the post-translational modification N6-(pyridoxal phosphate)lysine.

This sequence belongs to the class-I pyridoxal-phosphate-dependent aminotransferase family. It depends on pyridoxal 5'-phosphate as a cofactor.

The catalysed reaction is L-valine + pyruvate = 3-methyl-2-oxobutanoate + L-alanine. The polypeptide is Valine--pyruvate aminotransferase (Mycobacterium tuberculosis (strain ATCC 25618 / H37Rv)).